We begin with the raw amino-acid sequence, 317 residues long: Methionyl-tRNA formyltransferase (317 aa).

Residue 112–115 (SLLP) coordinates (6S)-5,6,7,8-tetrahydrofolate.

The protein belongs to the Fmt family.

The catalysed reaction is L-methionyl-tRNA(fMet) + (6R)-10-formyltetrahydrofolate = N-formyl-L-methionyl-tRNA(fMet) + (6S)-5,6,7,8-tetrahydrofolate + H(+). In terms of biological role, attaches a formyl group to the free amino group of methionyl-tRNA(fMet). The formyl group appears to play a dual role in the initiator identity of N-formylmethionyl-tRNA by promoting its recognition by IF2 and preventing the misappropriation of this tRNA by the elongation apparatus. This chain is Methionyl-tRNA formyltransferase, found in Histophilus somni (strain 129Pt) (Haemophilus somnus).